The primary structure comprises 82 residues: Small ribosomal subunit protein bS18 (82 aa).

Residues 1–24 (MKRTNMKKARMEQSRRPKKNPLKA) are disordered.

The protein belongs to the bacterial ribosomal protein bS18 family. Part of the 30S ribosomal subunit. Forms a tight heterodimer with protein bS6.

In terms of biological role, binds as a heterodimer with protein bS6 to the central domain of the 16S rRNA, where it helps stabilize the platform of the 30S subunit. The protein is Small ribosomal subunit protein bS18 of Corynebacterium jeikeium (strain K411).